The primary structure comprises 305 residues: UDP-N-acetylenolpyruvoylglucosamine reductase (305 aa).

An FAD-binding PCMH-type domain is found at 35–214; sequence VGGPAQALFT…RARMNEVQAH (180 aa). Arg-179 is an active-site residue. Ser-228 functions as the Proton donor in the catalytic mechanism. Glu-298 is an active-site residue.

This sequence belongs to the MurB family. FAD is required as a cofactor.

It is found in the cytoplasm. The catalysed reaction is UDP-N-acetyl-alpha-D-muramate + NADP(+) = UDP-N-acetyl-3-O-(1-carboxyvinyl)-alpha-D-glucosamine + NADPH + H(+). It participates in cell wall biogenesis; peptidoglycan biosynthesis. Cell wall formation. In Nitrobacter winogradskyi (strain ATCC 25391 / DSM 10237 / CIP 104748 / NCIMB 11846 / Nb-255), this protein is UDP-N-acetylenolpyruvoylglucosamine reductase.